Here is a 56-residue protein sequence, read N- to C-terminus: Large ribosomal subunit protein eL37 (56 aa).

Residues C19, C22, C34, and C37 each coordinate Zn(2+). The C4-type zinc finger occupies 19-37 (CRRCGRLSYNFNRKTCVAC).

Belongs to the eukaryotic ribosomal protein eL37 family. The cofactor is Zn(2+).

Its function is as follows. Binds to the 23S rRNA. The polypeptide is Large ribosomal subunit protein eL37 (Methanothrix thermoacetophila (strain DSM 6194 / JCM 14653 / NBRC 101360 / PT) (Methanosaeta thermophila)).